The following is a 168-amino-acid chain: G/U mismatch-specific DNA glycosylase (168 aa).

The protein belongs to the uracil-DNA glycosylase (UDG) superfamily. TDG/mug family. As to quaternary structure, binds DNA as a monomer.

The protein localises to the cytoplasm. It catalyses the reaction Specifically hydrolyzes mismatched double-stranded DNA and polynucleotides, releasing free uracil.. Functionally, excises ethenocytosine and uracil, which can arise by alkylation or deamination of cytosine, respectively, from the corresponding mispairs with guanine in ds-DNA. It is capable of hydrolyzing the carbon-nitrogen bond between the sugar-phosphate backbone of the DNA and the mispaired base. The complementary strand guanine functions in substrate recognition. Required for DNA damage lesion repair in stationary-phase cells. The protein is G/U mismatch-specific DNA glycosylase of Escherichia coli (strain UTI89 / UPEC).